A 206-amino-acid chain; its full sequence is Small ribosomal subunit protein uS4 (206 aa).

In terms of domain architecture, S4 RNA-binding spans 96 to 168; that stretch reads SRLDNVVYRM…LELAEQREKP (73 aa).

It belongs to the universal ribosomal protein uS4 family. As to quaternary structure, part of the 30S ribosomal subunit. Contacts protein S5. The interaction surface between S4 and S5 is involved in control of translational fidelity.

In terms of biological role, one of the primary rRNA binding proteins, it binds directly to 16S rRNA where it nucleates assembly of the body of the 30S subunit. With S5 and S12 plays an important role in translational accuracy. This is Small ribosomal subunit protein uS4 from Baumannia cicadellinicola subsp. Homalodisca coagulata.